A 157-amino-acid polypeptide reads, in one-letter code: MSKEIILTQEGLEELKAELKHLLKVVRPKVIEELVEARNQGDLSENADYDAARNRQAEVEARIKEVETLINRAKVIDDSKTHSTGEVKIGSTVQFVSSLDNKLKEIKIVGAIEADPFSNLISNESPIAKAIIGKKVNTTVEIKDISKPYKITIKSIK.

Residues 1–75 (MSKEIILTQE…VETLINRAKV (75 aa)) are a coiled coil.

Belongs to the GreA/GreB family.

In terms of biological role, necessary for efficient RNA polymerase transcription elongation past template-encoded arresting sites. The arresting sites in DNA have the property of trapping a certain fraction of elongating RNA polymerases that pass through, resulting in locked ternary complexes. Cleavage of the nascent transcript by cleavage factors such as GreA or GreB allows the resumption of elongation from the new 3'terminus. GreA releases sequences of 2 to 3 nucleotides. The chain is Transcription elongation factor GreA from Mycoplasma mycoides subsp. mycoides SC (strain CCUG 32753 / NCTC 10114 / PG1).